The following is a 322-amino-acid chain: Heterogeneous nuclear ribonucleoprotein D-like (322 aa).

The interval 1 to 36 (MTGTARSALPLPQSPARALRPSGAARAAPSLSPSRF) is disordered. At Arg-6 the chain carries Omega-N-methylarginine. The span at 14-36 (SPARALRPSGAARAAPSLSPSRF) shows a compositional bias: low complexity. RRM domains lie at 51 to 133 (NKMF…KGKE) and 136 to 215 (KKVF…QPKE). Lys-64 carries the post-translational modification N6-methyllysine. Residue Lys-112 forms a Glycyl lysine isopeptide (Lys-Gly) (interchain with G-Cter in SUMO2) linkage. Lys-119 carries the post-translational modification N6-acetyllysine. Phosphoserine is present on Ser-144. Disordered regions lie at residues 216–251 (VYRQ…NWNQ) and 299–322 (SGQQ…YQPY). Gly residues predominate over residues 226–245 (GGRGAAAGGRGGARGRGRGQ). Positions 245 to 322 (QGQNWNQGFN…GNHQNNYQPY (78 aa)) are necessary for interaction with TNPO1. Dimethylated arginine; alternate is present on Arg-310. At Arg-310 the chain carries Omega-N-methylarginine; alternate.

Interacts with TNPO1 and ZNF148. Post-translationally, dimethylation of Arg-310 is probably of the asymmetric type.

It is found in the nucleus. It localises to the cytoplasm. Functionally, acts as a transcriptional regulator. Promotes transcription repression. Promotes transcription activation in differentiated myotubes. Binds to double- and single-stranded DNA sequences. Binds to the transcription suppressor CATR sequence of the COX5B promoter. Binds with high affinity to RNA molecules that contain AU-rich elements (AREs) found within the 3'-UTR of many proto-oncogenes and cytokine mRNAs. Binds both to nuclear and cytoplasmic poly(A) mRNAs. Binds to poly(G) and poly(A), but not to poly(U) or poly(C) RNA homopolymers. Binds to the 5'-ACUAGC-3' RNA consensus sequence. This chain is Heterogeneous nuclear ribonucleoprotein D-like (Hnrnpdl), found in Rattus norvegicus (Rat).